We begin with the raw amino-acid sequence, 178 residues long: Deoxycytidylate deaminase (178 aa).

One can recognise a CMP/dCMP-type deaminase domain in the interval 14-146; it reads EWPEYFMAVA…EATAARLLFD (133 aa). Histidine 84 contacts Zn(2+). The active-site Proton donor is the glutamate 86. Cysteine 110 and cysteine 113 together coordinate Zn(2+). Phosphoserine is present on serine 174.

The protein belongs to the cytidine and deoxycytidylate deaminase family. Homohexamer. Zn(2+) serves as cofactor.

The catalysed reaction is dCMP + H2O + H(+) = dUMP + NH4(+). The enzyme catalyses 5-hydroxymethyl-dCMP + H2O + H(+) = 5-hydroxymethyl-dUMP + NH4(+). Its activity is regulated as follows. Allosteric enzyme whose activity is greatly influenced by the end products of its metabolic pathway, dCTP and dTTP. Functionally, catalyzes the deamination of dCMP to dUMP, providing the nucleoside monophosphate substrate for the thymidylate synthase/TYMS. Also, part of a nucleotide salvage pathway that eliminates epigenetically modified 5-hydroxymethyl-dCMP (hmdCMP) in a two-step process entailing deamination to cytotoxic 5-hydroxymethyl-dUMP (hmdUMP), followed by its hydrolysis into 5-hydroxymethyluracil (hmU) and 2-deoxy-D-ribose 5-phosphate (deoxyribosephosphate). Catalyzes the first step in that pathway, the deamination of 5-hydroxymethyl-dCMP (hmdCMP). In Pongo abelii (Sumatran orangutan), this protein is Deoxycytidylate deaminase.